Here is a 407-residue protein sequence, read N- to C-terminus: 1-deoxy-D-xylulose 5-phosphate reductoisomerase (407 aa).

NADPH-binding residues include threonine 10, glycine 11, serine 12, isoleucine 13, glycine 36, and asparagine 131. Residue lysine 132 coordinates 1-deoxy-D-xylulose 5-phosphate. Residue glutamate 133 coordinates NADPH. Aspartate 155 contacts Mn(2+). Serine 156, glutamate 157, serine 181, and histidine 204 together coordinate 1-deoxy-D-xylulose 5-phosphate. Glutamate 157 serves as a coordination point for Mn(2+). Glycine 210 serves as a coordination point for NADPH. 1-deoxy-D-xylulose 5-phosphate is bound by residues serine 217, asparagine 222, lysine 223, and glutamate 226. Glutamate 226 lines the Mn(2+) pocket.

The protein belongs to the DXR family. Mg(2+) serves as cofactor. Mn(2+) is required as a cofactor.

It catalyses the reaction 2-C-methyl-D-erythritol 4-phosphate + NADP(+) = 1-deoxy-D-xylulose 5-phosphate + NADPH + H(+). The protein operates within isoprenoid biosynthesis; isopentenyl diphosphate biosynthesis via DXP pathway; isopentenyl diphosphate from 1-deoxy-D-xylulose 5-phosphate: step 1/6. Its function is as follows. Catalyzes the NADPH-dependent rearrangement and reduction of 1-deoxy-D-xylulose-5-phosphate (DXP) to 2-C-methyl-D-erythritol 4-phosphate (MEP). The protein is 1-deoxy-D-xylulose 5-phosphate reductoisomerase of Cutibacterium acnes (strain DSM 16379 / KPA171202) (Propionibacterium acnes).